The chain runs to 258 residues: Imidazole glycerol phosphate synthase subunit HisF (258 aa).

Catalysis depends on residues D11 and D130.

Belongs to the HisA/HisF family. Heterodimer of HisH and HisF.

It is found in the cytoplasm. The catalysed reaction is 5-[(5-phospho-1-deoxy-D-ribulos-1-ylimino)methylamino]-1-(5-phospho-beta-D-ribosyl)imidazole-4-carboxamide + L-glutamine = D-erythro-1-(imidazol-4-yl)glycerol 3-phosphate + 5-amino-1-(5-phospho-beta-D-ribosyl)imidazole-4-carboxamide + L-glutamate + H(+). It functions in the pathway amino-acid biosynthesis; L-histidine biosynthesis; L-histidine from 5-phospho-alpha-D-ribose 1-diphosphate: step 5/9. Its function is as follows. IGPS catalyzes the conversion of PRFAR and glutamine to IGP, AICAR and glutamate. The HisF subunit catalyzes the cyclization activity that produces IGP and AICAR from PRFAR using the ammonia provided by the HisH subunit. This Escherichia coli O17:K52:H18 (strain UMN026 / ExPEC) protein is Imidazole glycerol phosphate synthase subunit HisF.